Consider the following 626-residue polypeptide: Dynein, cytoplasmic 1, intermediate chain 2a (626 aa).

Basic and acidic residues predominate over residues 20–43 (QIREEKKRKEEERKKKEAELKKDA). Disordered stretches follow at residues 20 to 108 (QIRE…RTLH) and 142 to 197 (KEVV…HELT). Positions 82-99 (TAKSVGSPSEAGSQDSGD) are enriched in polar residues. The segment covering 160 to 169 (KDEEDEEEET) has biased composition (acidic residues). The span at 177-197 (ETEKEKPEEKQVEEALPHELT) shows a compositional bias: basic and acidic residues. 7 WD repeats span residues 265-314 (SKQR…ATPE), 318-358 (HCQS…RTPV), 367-408 (AHTH…QPQD), 417-457 (SKSV…AGIS), 462-507 (GHHG…PLYS), 510-550 (DNSD…EVPT), and 556-595 (DGSP…AVPR).

This sequence belongs to the dynein intermediate chain family. As to quaternary structure, homodimer. The cytoplasmic dynein 1 complex consists of two catalytic heavy chains (HCs) and a number of non-catalytic subunits presented by intermediate chains (ICs), light intermediate chains (LICs) and light chains (LCs); the composition seems to vary in respect to the IC, LIC and LC composition. The heavy chain homodimer serves as a scaffold for the probable homodimeric assembly of the respective non-catalytic subunits. The ICs and LICs bind directly to the HC dimer and the LCs assemble on the IC dimer.

The protein resides in the cytoplasm. It localises to the cytoskeleton. In terms of biological role, acts as one of several non-catalytic accessory components of the cytoplasmic dynein 1 complex that are thought to be involved in linking dynein to cargos and to adapter proteins that regulate dynein function. Cytoplasmic dynein 1 acts as a motor for the intracellular retrograde motility of vesicles and organelles along microtubules. Plays a role in the development of anterior brain and cartilaginous structures. The sequence is that of Dynein, cytoplasmic 1, intermediate chain 2a (dync1i2a) from Danio rerio (Zebrafish).